The chain runs to 320 residues: 4-hydroxy-3-methylbut-2-enyl diphosphate reductase (320 aa).

Residue C13 coordinates [4Fe-4S] cluster. Residues H41 and H75 each contribute to the (2E)-4-hydroxy-3-methylbut-2-enyl diphosphate site. Dimethylallyl diphosphate-binding residues include H41 and H75. The isopentenyl diphosphate site is built by H41 and H75. Residue C97 participates in [4Fe-4S] cluster binding. H125 serves as a coordination point for (2E)-4-hydroxy-3-methylbut-2-enyl diphosphate. H125 is a dimethylallyl diphosphate binding site. Residue H125 participates in isopentenyl diphosphate binding. The Proton donor role is filled by E127. T168 serves as a coordination point for (2E)-4-hydroxy-3-methylbut-2-enyl diphosphate. Position 225 (C225) interacts with [4Fe-4S] cluster. The (2E)-4-hydroxy-3-methylbut-2-enyl diphosphate site is built by S253, S254, N255, and S302. Dimethylallyl diphosphate is bound by residues S253, S254, N255, and S302. Residues S253, S254, N255, and S302 each contribute to the isopentenyl diphosphate site.

Belongs to the IspH family. Requires [4Fe-4S] cluster as cofactor.

It catalyses the reaction isopentenyl diphosphate + 2 oxidized [2Fe-2S]-[ferredoxin] + H2O = (2E)-4-hydroxy-3-methylbut-2-enyl diphosphate + 2 reduced [2Fe-2S]-[ferredoxin] + 2 H(+). It carries out the reaction dimethylallyl diphosphate + 2 oxidized [2Fe-2S]-[ferredoxin] + H2O = (2E)-4-hydroxy-3-methylbut-2-enyl diphosphate + 2 reduced [2Fe-2S]-[ferredoxin] + 2 H(+). The protein operates within isoprenoid biosynthesis; dimethylallyl diphosphate biosynthesis; dimethylallyl diphosphate from (2E)-4-hydroxy-3-methylbutenyl diphosphate: step 1/1. It participates in isoprenoid biosynthesis; isopentenyl diphosphate biosynthesis via DXP pathway; isopentenyl diphosphate from 1-deoxy-D-xylulose 5-phosphate: step 6/6. In terms of biological role, catalyzes the conversion of 1-hydroxy-2-methyl-2-(E)-butenyl 4-diphosphate (HMBPP) into a mixture of isopentenyl diphosphate (IPP) and dimethylallyl diphosphate (DMAPP). Acts in the terminal step of the DOXP/MEP pathway for isoprenoid precursor biosynthesis. The protein is 4-hydroxy-3-methylbut-2-enyl diphosphate reductase of Chlorobium luteolum (strain DSM 273 / BCRC 81028 / 2530) (Pelodictyon luteolum).